We begin with the raw amino-acid sequence, 485 residues long: DNA polymerase subunit gamma-2 (485 aa).

The tract at residues 28 to 67 (RQPEQLSKGTGSFVGPVRSQAELPRNEPREAPESGGEGSE) is disordered.

In terms of assembly, heterotrimer composed of a catalytic subunit and a homodimer of accessory subunits (POLG:POLG2).

It localises to the mitochondrion. The protein resides in the mitochondrion matrix. The protein localises to the mitochondrion nucleoid. Accessory subunit of DNA polymerase gamma solely responsible for replication of mitochondrial DNA (mtDNA). Acts as an allosteric regulator of the holoenzyme activities. Enhances the polymerase activity and the processivity of POLG by increasing its interactions with the DNA template. Suppresses POLG exonucleolytic proofreading especially toward homopolymeric templates bearing mismatched termini. Binds to single-stranded DNA. The protein is DNA polymerase subunit gamma-2 (POLG2) of Bos taurus (Bovine).